The following is a 159-amino-acid chain: Nascent polypeptide-associated complex subunit beta (159 aa).

Disordered stretches follow at residues 1 to 39 (MDME…GMDD) and 124 to 159 (QSMQ…DKVE). Residues 23–32 (TPRRKVKNVH) show a composition bias toward basic residues. An NAC-A/B domain is found at 36–101 (GMDDKKLQTS…GEDKELTELV (66 aa)). Positions 136 to 153 (KDDEEDDDDIPDLVEGEN) are enriched in acidic residues.

The protein belongs to the NAC-beta family. In terms of assembly, part of the nascent polypeptide-associated complex (NAC), consisting of EGD2 and EGD1. NAC associates with ribosomes via EGD1.

The protein resides in the cytoplasm. It is found in the nucleus. Functionally, component of the nascent polypeptide-associated complex (NAC), a dynamic component of the ribosomal exit tunnel, protecting the emerging polypeptides from interaction with other cytoplasmic proteins to ensure appropriate nascent protein targeting. The NAC complex also promotes mitochondrial protein import by enhancing productive ribosome interactions with the outer mitochondrial membrane and blocks the inappropriate interaction of ribosomes translating non-secretory nascent polypeptides with translocation sites in the membrane of the endoplasmic reticulum. EGD1 may act as a transcription factor that exert a negative effect on the expression of several genes that are transcribed by RNA polymerase II. The chain is Nascent polypeptide-associated complex subunit beta (egd1) from Sclerotinia sclerotiorum (strain ATCC 18683 / 1980 / Ss-1) (White mold).